A 518-amino-acid chain; its full sequence is MNRRAVLSVSNKTGLVELARGLVELGFDLISTGGTFKTLTEAGLPVRYVTEVTGFPEILDGRVKTLHPRIHGGILARATAEHLQQLEDNGIGLIDLVVVNLYPFKETIARPGVSFQEAIENIDIGGPSMVRAAAKNQERVSIVVNPERYPEVLQALREQGEISYDMRKRLAAEAFAHTAEYDQCIAGYLTAALAEESVSSSSSPFPATITLGGQKAQDLRYGENPAQKAAFYRGADAAGTLAYGEQIQGKELSYNNWMDMDAAWGIVQDFSEPACAIIKHTNPCGTALGKTALEAYEKALAADPVSAFGGIIAFNRTVDAECAASLKAHFYEVIVAHEFSSDARAILQEKKNLRLVKVAQDGKPAHTPWKVRSIQGGFLIQEEDEGTTPISAWEVVSKRQPEPEELRELDFAWRVVKHVKSNAIVLAKAGQTLGVGAGQMNRVGSVKIALEQAGDKAQGAYLASDAFFPFPDSLEEAAKAGVRAVVQPGGSVRDAEVIEAADRLNLIMVFTNRRHFKH.

Residues 1-144 (MNRRAVLSVS…KNQERVSIVV (144 aa)) enclose the MGS-like domain.

Belongs to the PurH family.

It catalyses the reaction (6R)-10-formyltetrahydrofolate + 5-amino-1-(5-phospho-beta-D-ribosyl)imidazole-4-carboxamide = 5-formamido-1-(5-phospho-D-ribosyl)imidazole-4-carboxamide + (6S)-5,6,7,8-tetrahydrofolate. It carries out the reaction IMP + H2O = 5-formamido-1-(5-phospho-D-ribosyl)imidazole-4-carboxamide. It participates in purine metabolism; IMP biosynthesis via de novo pathway; 5-formamido-1-(5-phospho-D-ribosyl)imidazole-4-carboxamide from 5-amino-1-(5-phospho-D-ribosyl)imidazole-4-carboxamide (10-formyl THF route): step 1/1. It functions in the pathway purine metabolism; IMP biosynthesis via de novo pathway; IMP from 5-formamido-1-(5-phospho-D-ribosyl)imidazole-4-carboxamide: step 1/1. The polypeptide is Bifunctional purine biosynthesis protein PurH (Desulfitobacterium hafniense (strain DSM 10664 / DCB-2)).